The following is a 476-amino-acid chain: Amidophosphoribosyltransferase (476 aa).

Residues 1–11 constitute a propeptide that is removed on maturation; the sequence is MLAEIKGLNEE. Cys-12 acts as the Nucleophile in catalysis. Residues 12–231 form the Glutamine amidotransferase type-2 domain; the sequence is CGVFGIWGHE…PGEMLIINDE (220 aa). Cys-247 is a binding site for [4Fe-4S] cluster. Positions 294, 356, and 357 each coordinate Mg(2+). [4Fe-4S] cluster contacts are provided by Cys-393, Cys-448, and Cys-451.

In the C-terminal section; belongs to the purine/pyrimidine phosphoribosyltransferase family. As to quaternary structure, homotetramer. Mg(2+) is required as a cofactor. The cofactor is [4Fe-4S] cluster.

The catalysed reaction is 5-phospho-beta-D-ribosylamine + L-glutamate + diphosphate = 5-phospho-alpha-D-ribose 1-diphosphate + L-glutamine + H2O. It participates in purine metabolism; IMP biosynthesis via de novo pathway; N(1)-(5-phospho-D-ribosyl)glycinamide from 5-phospho-alpha-D-ribose 1-diphosphate: step 1/2. Its activity is regulated as follows. Allosterically regulated; subject to end product regulation by purine nucleotides. Catalyzes the formation of phosphoribosylamine from phosphoribosylpyrophosphate (PRPP) and glutamine. The protein is Amidophosphoribosyltransferase of Bacillus subtilis (strain 168).